Consider the following 272-residue polypeptide: 3-methyl-2-oxobutanoate hydroxymethyltransferase (272 aa).

Positions 52 and 91 each coordinate Mg(2+). Residues 52 to 53 (DS), Asp-91, and Lys-121 each bind 3-methyl-2-oxobutanoate. Glu-123 serves as a coordination point for Mg(2+). The active-site Proton acceptor is the Glu-190.

This sequence belongs to the PanB family. As to quaternary structure, homodecamer; pentamer of dimers. The cofactor is Mg(2+).

It is found in the cytoplasm. It carries out the reaction 3-methyl-2-oxobutanoate + (6R)-5,10-methylene-5,6,7,8-tetrahydrofolate + H2O = 2-dehydropantoate + (6S)-5,6,7,8-tetrahydrofolate. Its pathway is cofactor biosynthesis; (R)-pantothenate biosynthesis; (R)-pantoate from 3-methyl-2-oxobutanoate: step 1/2. In terms of biological role, catalyzes the reversible reaction in which hydroxymethyl group from 5,10-methylenetetrahydrofolate is transferred onto alpha-ketoisovalerate to form ketopantoate. The polypeptide is 3-methyl-2-oxobutanoate hydroxymethyltransferase (Flavobacterium johnsoniae (strain ATCC 17061 / DSM 2064 / JCM 8514 / BCRC 14874 / CCUG 350202 / NBRC 14942 / NCIMB 11054 / UW101) (Cytophaga johnsonae)).